The primary structure comprises 103 residues: uncharacterized protein (103 aa).

A helical transmembrane segment spans residues 37–57 (FILLSSLLIGGLLITIACYHI).

The protein localises to the membrane. This is an uncharacterized protein from Saccharomyces cerevisiae (strain ATCC 204508 / S288c) (Baker's yeast).